The sequence spans 233 residues: TATA-box-binding protein 1 (233 aa).

2 repeat units span residues 58–134 (LQNI…ARIV) and 148–225 (IQNI…YPVL).

It belongs to the TBP family. In terms of assembly, belongs to the TFIID complex together with the TBP-associated factors (TAFs). Binds DNA as monomer.

The protein localises to the nucleus. In terms of biological role, general transcription factor that functions at the core of the DNA-binding multiprotein factor TFIID. Binding of TFIID to the TATA box is the initial transcriptional step of the pre-initiation complex (PIC), playing a role in the activation of eukaryotic genes transcribed by RNA polymerase II. In Triticum aestivum (Wheat), this protein is TATA-box-binding protein 1 (TBP1).